A 64-amino-acid polypeptide reads, in one-letter code: Conotoxin VnMLCL-033 (64 aa).

Residues M1–P19 form the signal peptide. The propeptide occupies N20–D43. Isoleucine amide is present on I63.

This sequence belongs to the conotoxin T superfamily. In terms of tissue distribution, expressed by the venom duct.

It localises to the secreted. In Conus ventricosus (Mediterranean cone), this protein is Conotoxin VnMLCL-033.